The chain runs to 205 residues: Methyltransferase-like 26 B (205 aa).

This sequence belongs to the UPF0585 family.

The sequence is that of Methyltransferase-like 26 B from Danio rerio (Zebrafish).